We begin with the raw amino-acid sequence, 653 residues long: MEQEREIVFSLSPEETSELKNGVNLISRSEKEKFVIYKDPTAENTVEEPATSHMYKACLNKCKHQGGTFIKDIEDGDNCILRCTKHGWKLDAKTMRYVNPPDSFSQQQLVPEYNEDGSLDIVELKPPQPWETDKRDPMPLEVGEVQITYFTHACIEIKLGDLIMFTDPWLIGPAFARGWWLMHEPPADWLDRLAKADLIYISHLHSDHLNYPTLELLSQRNPDIPIYVGDTSMPVFVRLEQSGVKLNNIHIKKFGKWIEINKDTRFMIMMDGVHPDMDTCALIDYKGHLILDTVDCTNPNGGRLPIGVDMMLSDFAGGASGFPMTFSGGKYTEEWKAEFVKRERRKLLYYKMQQVRDVAPTVYCPFAGYFVEAHPSDHYIRSTNTKNDPDALNALINKYSPNIKTWSPSPGAVLDLKKAIQGDRDFITDPPRGTQKFKDSWDFEKYVNAINKNIEEEIFSYPEWIQFYYKWTGFKNYNLVIRMVERDDDFCPVVGGYDFMVDFVGEEPTFPTERPAREHSYLEMENRIGVHRETVRQGLFWDDLYIGFNNRISREPDTFHYLFWNHMQILLPRTDPDWEGFLRDMKTEGAPQKAIWNPSQATPAVEAKDPSSDSKDSATKPGTHWNYERLLRPLGIVVALVGVGVAIWKSESK.

The Rieske domain occupies 11-120 (LSPEETSELK…PEYNEDGSLD (110 aa)). [2Fe-2S] cluster-binding residues include C62, H64, C83, and H86. Positions 596-622 (WNPSQATPAVEAKDPSSDSKDSATKPG) are disordered. A compositionally biased stretch (basic and acidic residues) spans 606 to 618 (EAKDPSSDSKDSA). A helical membrane pass occupies residues 630 to 647 (LLRPLGIVVALVGVGVAI).

Belongs to the CMP-Neu5Ac hydroxylase family. Requires [2Fe-2S] cluster as cofactor.

It localises to the membrane. It catalyses the reaction CMP-N-acetyl-beta-neuraminate + 2 Fe(II)-[cytochrome b5] + O2 + 2 H(+) = CMP-N-glycoloyl-beta-neuraminate + 2 Fe(III)-[cytochrome b5] + H2O. It participates in amino-sugar metabolism; N-acetylneuraminate metabolism. Sialic acids are components of carbohydrate chains of glycoconjugates and are involved in cell-cell recognition and cell-pathogen interactions. Catalyzes the conversion of CMP-N-acetylneuraminic acid (CMP-Neu5Ac) into its hydroxylated derivative CMP-N-glycolylneuraminic acid (CMP-Neu5Gc), a sialic acid abundantly expressed at the surface of many cells. The sequence is that of Cytidine monophosphate-N-acetylneuraminic acid hydroxylase (cnh) from Asterias rubens (Common European starfish).